An 839-amino-acid polypeptide reads, in one-letter code: Glycerol-3-phosphate acyltransferase (839 aa).

The short motif at 309–314 is the HXXXXD motif element; sequence CHRSHI.

The protein belongs to the GPAT/DAPAT family.

It localises to the cell inner membrane. It catalyses the reaction sn-glycerol 3-phosphate + an acyl-CoA = a 1-acyl-sn-glycero-3-phosphate + CoA. Its pathway is phospholipid metabolism; CDP-diacylglycerol biosynthesis; CDP-diacylglycerol from sn-glycerol 3-phosphate: step 1/3. The sequence is that of Glycerol-3-phosphate acyltransferase from Pseudomonas fluorescens (strain SBW25).